We begin with the raw amino-acid sequence, 252 residues long: 3-dehydroquinate dehydratase (252 aa).

Residues serine 21, 46–48 (EWR), and arginine 82 each bind 3-dehydroquinate. The active-site Proton donor/acceptor is the histidine 143. The active-site Schiff-base intermediate with substrate is lysine 170. Residues arginine 213, serine 232, and glutamine 236 each contribute to the 3-dehydroquinate site.

It belongs to the type-I 3-dehydroquinase family. Homodimer.

It carries out the reaction 3-dehydroquinate = 3-dehydroshikimate + H2O. It functions in the pathway metabolic intermediate biosynthesis; chorismate biosynthesis; chorismate from D-erythrose 4-phosphate and phosphoenolpyruvate: step 3/7. In terms of biological role, involved in the third step of the chorismate pathway, which leads to the biosynthesis of aromatic amino acids. Catalyzes the cis-dehydration of 3-dehydroquinate (DHQ) and introduces the first double bond of the aromatic ring to yield 3-dehydroshikimate. The polypeptide is 3-dehydroquinate dehydratase (Shigella dysenteriae serotype 1 (strain Sd197)).